The sequence spans 643 residues: 1-deoxy-D-xylulose-5-phosphate synthase (643 aa).

Residues His-89 and 130 to 132 (GHS) contribute to the thiamine diphosphate site. Asp-161 provides a ligand contact to Mg(2+). Residues 162–163 (GA), Asn-190, Phe-297, and Glu-380 each bind thiamine diphosphate. Position 190 (Asn-190) interacts with Mg(2+).

This sequence belongs to the transketolase family. DXPS subfamily. In terms of assembly, homodimer. The cofactor is Mg(2+). Thiamine diphosphate serves as cofactor.

The enzyme catalyses D-glyceraldehyde 3-phosphate + pyruvate + H(+) = 1-deoxy-D-xylulose 5-phosphate + CO2. It functions in the pathway metabolic intermediate biosynthesis; 1-deoxy-D-xylulose 5-phosphate biosynthesis; 1-deoxy-D-xylulose 5-phosphate from D-glyceraldehyde 3-phosphate and pyruvate: step 1/1. In terms of biological role, catalyzes the acyloin condensation reaction between C atoms 2 and 3 of pyruvate and glyceraldehyde 3-phosphate to yield 1-deoxy-D-xylulose-5-phosphate (DXP). The chain is 1-deoxy-D-xylulose-5-phosphate synthase from Hahella chejuensis (strain KCTC 2396).